Consider the following 132-residue polypeptide: Small ribosomal subunit protein uS8 (132 aa).

Belongs to the universal ribosomal protein uS8 family. Part of the 30S ribosomal subunit. Contacts proteins S5 and S12.

Functionally, one of the primary rRNA binding proteins, it binds directly to 16S rRNA central domain where it helps coordinate assembly of the platform of the 30S subunit. This Azorhizobium caulinodans (strain ATCC 43989 / DSM 5975 / JCM 20966 / LMG 6465 / NBRC 14845 / NCIMB 13405 / ORS 571) protein is Small ribosomal subunit protein uS8.